The sequence spans 435 residues: Methylenetetrahydrofolate--tRNA-(uracil-5-)-methyltransferase TrmFO (435 aa).

Residue 9-14 coordinates FAD; it reads GGGLAG.

It belongs to the MnmG family. TrmFO subfamily. FAD serves as cofactor.

It is found in the cytoplasm. The catalysed reaction is uridine(54) in tRNA + (6R)-5,10-methylene-5,6,7,8-tetrahydrofolate + NADH + H(+) = 5-methyluridine(54) in tRNA + (6S)-5,6,7,8-tetrahydrofolate + NAD(+). The enzyme catalyses uridine(54) in tRNA + (6R)-5,10-methylene-5,6,7,8-tetrahydrofolate + NADPH + H(+) = 5-methyluridine(54) in tRNA + (6S)-5,6,7,8-tetrahydrofolate + NADP(+). In terms of biological role, catalyzes the folate-dependent formation of 5-methyl-uridine at position 54 (M-5-U54) in all tRNAs. The protein is Methylenetetrahydrofolate--tRNA-(uracil-5-)-methyltransferase TrmFO of Citrifermentans bemidjiense (strain ATCC BAA-1014 / DSM 16622 / JCM 12645 / Bem) (Geobacter bemidjiensis).